The chain runs to 477 residues: Aspartyl/glutamyl-tRNA(Asn/Gln) amidotransferase subunit B (477 aa).

This sequence belongs to the GatB/GatE family. GatB subfamily. In terms of assembly, heterotrimer of A, B and C subunits.

The enzyme catalyses L-glutamyl-tRNA(Gln) + L-glutamine + ATP + H2O = L-glutaminyl-tRNA(Gln) + L-glutamate + ADP + phosphate + H(+). It carries out the reaction L-aspartyl-tRNA(Asn) + L-glutamine + ATP + H2O = L-asparaginyl-tRNA(Asn) + L-glutamate + ADP + phosphate + 2 H(+). Functionally, allows the formation of correctly charged Asn-tRNA(Asn) or Gln-tRNA(Gln) through the transamidation of misacylated Asp-tRNA(Asn) or Glu-tRNA(Gln) in organisms which lack either or both of asparaginyl-tRNA or glutaminyl-tRNA synthetases. The reaction takes place in the presence of glutamine and ATP through an activated phospho-Asp-tRNA(Asn) or phospho-Glu-tRNA(Gln). The protein is Aspartyl/glutamyl-tRNA(Asn/Gln) amidotransferase subunit B of Methylobacillus flagellatus (strain ATCC 51484 / DSM 6875 / VKM B-1610 / KT).